The following is a 277-amino-acid chain: Energy-coupling factor transporter ATP-binding protein EcfA1 (277 aa).

The ABC transporter domain occupies Ile-5 to Asp-243. Gly-42 to Ser-49 contributes to the ATP binding site.

This sequence belongs to the ABC transporter superfamily. Energy-coupling factor EcfA family. As to quaternary structure, forms a stable energy-coupling factor (ECF) transporter complex composed of 2 membrane-embedded substrate-binding proteins (S component), 2 ATP-binding proteins (A component) and 2 transmembrane proteins (T component).

The protein resides in the cell membrane. ATP-binding (A) component of a common energy-coupling factor (ECF) ABC-transporter complex. Unlike classic ABC transporters this ECF transporter provides the energy necessary to transport a number of different substrates. In Caldanaerobacter subterraneus subsp. tengcongensis (strain DSM 15242 / JCM 11007 / NBRC 100824 / MB4) (Thermoanaerobacter tengcongensis), this protein is Energy-coupling factor transporter ATP-binding protein EcfA1.